A 467-amino-acid chain; its full sequence is Phytase A (467 aa).

An N-terminal signal peptide occupies residues 1-23; sequence MGVSAVLLPLYLLAGVTSGLAVP. Asparagine 27 carries an N-linked (GlcNAc...) asparagine glycan. The cysteines at positions 31 and 40 are disulfide-linked. The 1D-myo-inositol hexakisphosphate site is built by glutamine 50 and tyrosine 51. N-linked (GlcNAc...) asparagine glycosylation occurs at asparagine 59. Cystine bridges form between cysteine 71/cysteine 414, cysteine 215/cysteine 465, cysteine 264/cysteine 282, and cysteine 436/cysteine 444. 4 residues coordinate 1D-myo-inositol hexakisphosphate: arginine 81, histidine 82, arginine 85, and threonine 88. Histidine 82 functions as the Nucleophile in the catalytic mechanism. N-linked (GlcNAc...) asparagine glycans are attached at residues asparagine 105 and asparagine 120. Arginine 165 lines the 1D-myo-inositol hexakisphosphate pocket. N-linked (GlcNAc...) asparagine glycosylation is found at asparagine 207 and asparagine 230. Lysine 301 lines the 1D-myo-inositol hexakisphosphate pocket. N-linked (GlcNAc...) asparagine glycosylation is found at asparagine 339 and asparagine 352. Residues histidine 361 and aspartate 362 each contribute to the 1D-myo-inositol hexakisphosphate site. N-linked (GlcNAc...) asparagine glycosylation is found at asparagine 376 and asparagine 388.

The protein belongs to the histidine acid phosphatase family. As to quaternary structure, monomer.

It is found in the secreted. It catalyses the reaction 1D-myo-inositol hexakisphosphate + H2O = 1D-myo-inositol 1,2,4,5,6-pentakisphosphate + phosphate. It carries out the reaction 1D-myo-inositol 1,2,4,5,6-pentakisphosphate + H2O = 1D-myo-inositol 1,2,5,6-tetrakisphosphate + phosphate. The catalysed reaction is 1D-myo-inositol 1,2,5,6-tetrakisphosphate + H2O = 1D-myo-inositol 1,2,6-trisphosphate + phosphate. The enzyme catalyses 1D-myo-inositol 1,2,6-trisphosphate + H2O = 1D-myo-inositol 1,2-bisphosphate + phosphate. It catalyses the reaction 1D-myo-inositol 1,2-bisphosphate + H2O = 1D-myo-inositol 2-phosphate + phosphate. In terms of biological role, catalyzes the phosphate monoester hydrolysis of phytic acid (myo-inositol hexakisphosphate), which results in the stepwise formation of myo-inositol pentakis-, tetrakis-, tris-, bis-, and monophosphates, as well as the liberation of inorganic phosphate. Myo-inositol 2-monophosphate is the end product. This Aspergillus awamori (Black koji mold) protein is Phytase A (phyA).